The sequence spans 692 residues: E3 ubiquitin-protein ligase MARCHF7 (692 aa).

Methionine 1 carries the N-acetylmethionine modification. Disordered regions lie at residues 1 to 165, 201 to 280, 296 to 343, 360 to 425, 440 to 474, and 512 to 532; these read MESK…SHRS, STNH…GRRT, FFSR…RASE, LSQN…HLFR, SLGAAASRPQASGASGNASASGSTPDLPQGGRNTG, and SSADGKSEKAKSAPSRDPEKL. Positions 37 to 48 are enriched in basic and acidic residues; that stretch reads YHSRDSSFRLDS. 2 stretches are compositionally biased toward polar residues: residues 61 to 83 and 95 to 132; these read PYQSTWYSESEITQGARSRSQNQ and SCTNCTSTSAGRNIGSGLNTLSDSSWRPGQVPRSSSMV. Residues 140 to 153 show a composition bias toward basic and acidic residues; sequence LMRERRDLERRRDS. Over residues 201–214 the composition is skewed to polar residues; the sequence is STNHQLPSEHQTVP. Residues 215 to 233 are compositionally biased toward low complexity; that stretch reads SSRDSSRSSFRSHFSPRQS. A compositionally biased stretch (polar residues) spans 235-272; sequence SFRNSSHPAFSYLSSRNETPTISSSERAGSSQRPFQES. Residues 296–305 show a composition bias toward low complexity; the sequence is FFSRRSSQDS. Residues 306–336 show a composition bias toward polar residues; that stretch reads LNTRSLSSENYISPRTLTSQSRNNGASSSEV. Residues serine 318 and serine 389 each carry the phosphoserine modification. Residues 450-462 are compositionally biased toward low complexity; that stretch reads ASGASGNASASGS. Over residues 516–532 the composition is skewed to basic and acidic residues; sequence GKSEKAKSAPSRDPEKL. The RING-CH-type zinc-finger motif lies at 545–615; sequence DEEEEGDLCR…ELCKEKLQLN (71 aa). Residues cysteine 553, cysteine 556, cysteine 571, cysteine 573, histidine 581, cysteine 584, cysteine 605, and cysteine 608 each contribute to the Zn(2+) site. Threonine 687 is subject to Phosphothreonine. Serine 688 is modified (phosphoserine).

Its subcellular location is the cytoplasm. It carries out the reaction S-ubiquitinyl-[E2 ubiquitin-conjugating enzyme]-L-cysteine + [acceptor protein]-L-lysine = [E2 ubiquitin-conjugating enzyme]-L-cysteine + N(6)-ubiquitinyl-[acceptor protein]-L-lysine.. The protein operates within protein modification; protein ubiquitination. In terms of biological role, E3 ubiquitin-protein ligase which may specifically enhance the E2 activity of HIP2. E3 ubiquitin ligases accept ubiquitin from an E2 ubiquitin-conjugating enzyme in the form of a thioester and then directly transfer the ubiquitin to targeted substrates. May be involved in T-cell proliferation by regulating LIF secretion. May play a role in lysosome homeostasis. Promotes 'Lys-6', 'Lys-11' and 'Lys-63'-linked mixed polyubiquitination on ATG14 leading to the inhibition of autophagy by impairing the interaction between ATG14 and STX7. Participates in the dopamine-mediated negative regulation of the NLRP3 inflammasome by promoting its uibiquitination and subsequent degradation. This chain is E3 ubiquitin-protein ligase MARCHF7 (Marchf7), found in Rattus norvegicus (Rat).